The following is a 417-amino-acid chain: Tyrosine--tRNA ligase (417 aa).

Tyr-39 contacts L-tyrosine. A 'HIGH' region motif is present at residues 44 to 53 (PTAASLHAGG). 2 residues coordinate L-tyrosine: Tyr-176 and Gln-180. A 'KMSKS' region motif is present at residues 236–240 (KMGKS). Lys-239 serves as a coordination point for ATP. The S4 RNA-binding domain maps to 350-417 (LGLLTLLVRA…KKKHLLVRPV (68 aa)).

It belongs to the class-I aminoacyl-tRNA synthetase family. TyrS type 1 subfamily. As to quaternary structure, homodimer.

The protein localises to the cytoplasm. It carries out the reaction tRNA(Tyr) + L-tyrosine + ATP = L-tyrosyl-tRNA(Tyr) + AMP + diphosphate + H(+). Its function is as follows. Catalyzes the attachment of tyrosine to tRNA(Tyr) in a two-step reaction: tyrosine is first activated by ATP to form Tyr-AMP and then transferred to the acceptor end of tRNA(Tyr). This chain is Tyrosine--tRNA ligase, found in Rhizobium meliloti (strain 1021) (Ensifer meliloti).